Reading from the N-terminus, the 470-residue chain is Putative multidrug resistance protein MdtD (470 aa).

Residues 1–11 (MTELPDNTRWQ) are Periplasmic-facing. The chain crosses the membrane as a helical span at residues 12–32 (LWIVAFGFFMQSLDTTIVNTA). The Cytoplasmic segment spans residues 33-48 (LPSMAKSLGESPLHMH). A helical transmembrane segment spans residues 49-69 (MVVVSYVLTVAVMLPASGWLA). Over 70–76 (DKIGVRN) the chain is Periplasmic. The chain crosses the membrane as a helical span at residues 77-97 (IFFAAIVLFTLGSLFCALSGT). Residues 98–101 (LNQL) lie on the Cytoplasmic side of the membrane. A helical transmembrane segment spans residues 102–124 (VLARVLQGVGGAMMVPVGRLTVM). Residues 125–137 (KIVPRTQYMAAMT) are Periplasmic-facing. The helical transmembrane segment at 138–158 (FVTLPGQIGPLLGPALGGVLV) threads the bilayer. Residues 159-164 (EYASWH) lie on the Cytoplasmic side of the membrane. Residues 165-185 (WIFLINIPVGIVGAMATFMLM) form a helical membrane-spanning segment. The Periplasmic portion of the chain corresponds to 186–196 (PNYTIETRRFD). The chain crosses the membrane as a helical span at residues 197–217 (LPGFLLLAIGMAVLTLALDGS). Over 218 to 224 (KSMGISP) the chain is Cytoplasmic. A helical membrane pass occupies residues 225–245 (WTLAGLAAGGAAAILLYLFHA). The Periplasmic segment spans residues 246-262 (KKNSGALFSLRLFRTPT). A helical membrane pass occupies residues 263 to 283 (FSLGLLGSFAGRIGSGMLPFM). The Cytoplasmic segment spans residues 284-285 (TP). The helical transmembrane segment at 286–306 (VFLQIGLGFSPFHAGLMMIPM) threads the bilayer. Over 307–341 (VLGSMGMKRIVVQIVNRFGYRRVLVATTLGLALVS) the chain is Periplasmic. The helical transmembrane segment at 342-362 (LLFMSVALLGWYYLLPLVLLL) threads the bilayer. The Cytoplasmic portion of the chain corresponds to 363–395 (QGMVNSARFSSMNTLTLKDLPDTLASSGNSLLS). The chain crosses the membrane as a helical span at residues 396 to 416 (MIMQLSMSIGVTIAGMLLGMF). At 417–430 (GQQHIGIDSSATHH) the chain is on the periplasmic side. Residues 431–451 (VFMYTWLCMAVIIALPAIIFA) form a helical membrane-spanning segment. Topologically, residues 452–470 (RVPNDTQQNMVISRRKRSL) are cytoplasmic.

Belongs to the major facilitator superfamily. TCR/Tet family.

It is found in the cell inner membrane. In Salmonella dublin (strain CT_02021853), this protein is Putative multidrug resistance protein MdtD.